The following is a 129-amino-acid chain: Large ribosomal subunit protein uL22 (129 aa).

This sequence belongs to the universal ribosomal protein uL22 family. In terms of assembly, part of the 50S ribosomal subunit.

In terms of biological role, this protein binds specifically to 23S rRNA; its binding is stimulated by other ribosomal proteins, e.g. L4, L17, and L20. It is important during the early stages of 50S assembly. It makes multiple contacts with different domains of the 23S rRNA in the assembled 50S subunit and ribosome. The globular domain of the protein is located near the polypeptide exit tunnel on the outside of the subunit, while an extended beta-hairpin is found that lines the wall of the exit tunnel in the center of the 70S ribosome. This is Large ribosomal subunit protein uL22 from Phytoplasma sp. (strain STRAWB2).